The primary structure comprises 500 residues: L-arabinose isomerase (500 aa).

Residues Glu-306, Glu-333, His-349, and His-448 each contribute to the Mn(2+) site.

Belongs to the arabinose isomerase family. It depends on Mn(2+) as a cofactor.

The catalysed reaction is beta-L-arabinopyranose = L-ribulose. Its pathway is carbohydrate degradation; L-arabinose degradation via L-ribulose; D-xylulose 5-phosphate from L-arabinose (bacterial route): step 1/3. Functionally, catalyzes the conversion of L-arabinose to L-ribulose. This is L-arabinose isomerase from Shewanella sp. (strain MR-4).